Consider the following 364-residue polypeptide: MANTIGKMFSVTSFGSSHGKAVGAVIDGCPANLELNTEDIQKELDKRKPGTSGVTTPRKEEDKVQILSGIFEGKTDGTPITGVVYNNNQHSKDYSMFKNTPRPSHGDYGWMSKYGNYDYNGGGRGSGRITIGHVIAGAIAKKLLKTKNIEIVSQVIQIGDIMAHSNDFDTVKENVEKNSVRCGDLEAAKAMEELILSKKQEGDSIGGIVETVAVGVPAGLGEPVFERLDGDLARILMNINAVKGVEIGFGFDVATSCASEINDEYYIEDNKIYTSTNSSGGIIGGISNGMPIISRIAVKPTPSISKCQKSVNLEKMEAEDITIQGRHDPCICPRATVVAQSSVAIVLADHMIRSGYIHPSNLEI.

Residue Arg47 coordinates NADP(+). Residues Arg124 to Ser126, Asn240 to Ala241, Gly284, Lys299 to Ser303, and Arg326 each bind FMN.

Belongs to the chorismate synthase family. Requires FMNH2 as cofactor.

It carries out the reaction 5-O-(1-carboxyvinyl)-3-phosphoshikimate = chorismate + phosphate. It functions in the pathway metabolic intermediate biosynthesis; chorismate biosynthesis; chorismate from D-erythrose 4-phosphate and phosphoenolpyruvate: step 7/7. Functionally, catalyzes the anti-1,4-elimination of the C-3 phosphate and the C-6 proR hydrogen from 5-enolpyruvylshikimate-3-phosphate (EPSP) to yield chorismate, which is the branch point compound that serves as the starting substrate for the three terminal pathways of aromatic amino acid biosynthesis. This reaction introduces a second double bond into the aromatic ring system. This is Chorismate synthase from Methanobrevibacter smithii (strain ATCC 35061 / DSM 861 / OCM 144 / PS).